Here is a 441-residue protein sequence, read N- to C-terminus: Gluconate 2-dehydrogenase cytochrome c subunit (441 aa).

The signal sequence occupies residues 1–19 (MMKSILALVLGTLSFAALA). 3 consecutive Cytochrome c domains span residues 26-129 (ALVK…MHGV), 173-289 (PVLA…KSLG), and 312-403 (DDSQ…RGSW). Residues cysteine 40, cysteine 43, histidine 44, cysteine 188, cysteine 191, histidine 192, cysteine 325, cysteine 328, and histidine 329 each contribute to the heme c site.

As to quaternary structure, heterotrimer. It depends on FAD as a cofactor. In terms of processing, binds 3 heme c groupd covalently per subunit.

Its subcellular location is the cell membrane. It catalyses the reaction D-gluconate + A = 2-dehydro-D-gluconate + AH2. Part of the heterotrimer that catalyzes the conversion of D-gluconate to 2-dehydro-D-gluconate. In Pantoea cypripedii (Pectobacterium cypripedii), this protein is Gluconate 2-dehydrogenase cytochrome c subunit.